Reading from the N-terminus, the 42-residue chain is Cytochrome b559 subunit beta (42 aa).

A helical transmembrane segment spans residues 17-33 (WLAIHAIGIPAVFFIGS). H21 lines the heme pocket.

Belongs to the PsbE/PsbF family. Heterodimer of an alpha subunit and a beta subunit. PSII is composed of 1 copy each of membrane proteins PsbA, PsbB, PsbC, PsbD, PsbE, PsbF, PsbH, PsbI, PsbJ, PsbK, PsbL, PsbM, PsbT, PsbX, PsbY, PsbZ, Psb30/Ycf12, at least 3 peripheral proteins of the oxygen-evolving complex and a large number of cofactors. It forms dimeric complexes. Heme b serves as cofactor.

It localises to the plastid. It is found in the cyanelle thylakoid membrane. Functionally, this b-type cytochrome is tightly associated with the reaction center of photosystem II (PSII). PSII is a light-driven water:plastoquinone oxidoreductase that uses light energy to abstract electrons from H(2)O, generating O(2) and a proton gradient subsequently used for ATP formation. It consists of a core antenna complex that captures photons, and an electron transfer chain that converts photonic excitation into a charge separation. The sequence is that of Cytochrome b559 subunit beta from Cyanophora paradoxa.